Reading from the N-terminus, the 273-residue chain is Orotidine 5'-phosphate decarboxylase (273 aa).

Lys95 (proton donor) is an active-site residue.

The protein belongs to the OMP decarboxylase family. Type 2 subfamily.

It carries out the reaction orotidine 5'-phosphate + H(+) = UMP + CO2. The protein operates within pyrimidine metabolism; UMP biosynthesis via de novo pathway; UMP from orotate: step 2/2. The sequence is that of Orotidine 5'-phosphate decarboxylase from Bordetella bronchiseptica (strain ATCC BAA-588 / NCTC 13252 / RB50) (Alcaligenes bronchisepticus).